The following is a 266-amino-acid chain: Orotidine 5'-phosphate decarboxylase (266 aa).

Substrate-binding positions include Asp-38, 60 to 62, 92 to 101, Tyr-218, and Arg-236; these read KTH and DRKFADIGNT. The active-site Proton donor is Lys-94.

It belongs to the OMP decarboxylase family.

It catalyses the reaction orotidine 5'-phosphate + H(+) = UMP + CO2. Its pathway is pyrimidine metabolism; UMP biosynthesis via de novo pathway; UMP from orotate: step 2/2. The chain is Orotidine 5'-phosphate decarboxylase (URA3) from Candida maltosa (Yeast).